Consider the following 971-residue polypeptide: Isoleucine--tRNA ligase (971 aa).

The 'HIGH' region signature appears at 60–70 (PYANGDLHIGH). E563 serves as a coordination point for L-isoleucyl-5'-AMP. The 'KMSKS' region signature appears at 604 to 608 (KMSKS). K607 contributes to the ATP binding site. The Zn(2+) site is built by C922, C925, C942, and C945.

This sequence belongs to the class-I aminoacyl-tRNA synthetase family. IleS type 1 subfamily. As to quaternary structure, monomer. Zn(2+) serves as cofactor.

Its subcellular location is the cytoplasm. It carries out the reaction tRNA(Ile) + L-isoleucine + ATP = L-isoleucyl-tRNA(Ile) + AMP + diphosphate. In terms of biological role, catalyzes the attachment of isoleucine to tRNA(Ile). As IleRS can inadvertently accommodate and process structurally similar amino acids such as valine, to avoid such errors it has two additional distinct tRNA(Ile)-dependent editing activities. One activity is designated as 'pretransfer' editing and involves the hydrolysis of activated Val-AMP. The other activity is designated 'posttransfer' editing and involves deacylation of mischarged Val-tRNA(Ile). The polypeptide is Isoleucine--tRNA ligase (Acaryochloris marina (strain MBIC 11017)).